The primary structure comprises 273 residues: Ribosomal RNA small subunit methyltransferase A (273 aa).

The S-adenosyl-L-methionine site is built by N20, L22, G47, E68, D90, and N110.

The protein belongs to the class I-like SAM-binding methyltransferase superfamily. rRNA adenine N(6)-methyltransferase family. RsmA subfamily.

It is found in the cytoplasm. The enzyme catalyses adenosine(1518)/adenosine(1519) in 16S rRNA + 4 S-adenosyl-L-methionine = N(6)-dimethyladenosine(1518)/N(6)-dimethyladenosine(1519) in 16S rRNA + 4 S-adenosyl-L-homocysteine + 4 H(+). In terms of biological role, specifically dimethylates two adjacent adenosines (A1518 and A1519) in the loop of a conserved hairpin near the 3'-end of 16S rRNA in the 30S particle. May play a critical role in biogenesis of 30S subunits. The chain is Ribosomal RNA small subunit methyltransferase A from Chlorobium luteolum (strain DSM 273 / BCRC 81028 / 2530) (Pelodictyon luteolum).